Consider the following 130-residue polypeptide: Ribosome biogenesis inhibitor MINAS-60 (130 aa).

Residues 61 to 130 (SKVQRIPTRP…RRRRPVTSSC (70 aa)) form a disordered region. Basic residues predominate over residues 109–130 (KGRRRRRRMRRRRRRRPVTSSC).

In terms of assembly, interacts with 60S ribosome assembly factors GTPBP4 and MRTO4.

The protein localises to the nucleus. It is found in the nucleolus. In terms of biological role, acts as a late-stage inhibitor of pre-60S ribosome assembly by preventing pre-60S ribosome export from nucleus. The sequence is that of Ribosome biogenesis inhibitor MINAS-60 from Mus musculus (Mouse).